The following is a 215-amino-acid chain: Urease accessory protein UreG (215 aa).

The interval Met1 to Gly21 is disordered. Gly24–Thr31 contacts GTP.

It belongs to the SIMIBI class G3E GTPase family. UreG subfamily. As to quaternary structure, homodimer. UreD, UreF and UreG form a complex that acts as a GTP-hydrolysis-dependent molecular chaperone, activating the urease apoprotein by helping to assemble the nickel containing metallocenter of UreC. The UreE protein probably delivers the nickel.

It is found in the cytoplasm. Facilitates the functional incorporation of the urease nickel metallocenter. This process requires GTP hydrolysis, probably effectuated by UreG. The polypeptide is Urease accessory protein UreG (Burkholderia lata (strain ATCC 17760 / DSM 23089 / LMG 22485 / NCIMB 9086 / R18194 / 383)).